A 200-amino-acid polypeptide reads, in one-letter code: MSEFIYLASQSPRRSQLLALLGVRHELLLPDADEDAEALEAVLPNEAPAAYVKRVTQLKLDAALQRLKRRGLPAAPVLCSDTTVALGRKIFGKPTDAADATRMLKELSNTTHRVLTAVALGTARKREQVLCESRVTFSAMSSRQIQTYAASGEPLGKAGAYAVQGRAAAFISHMSGSYSGIMGLPMFETAQLLQSFGFKV.

The active-site Proton acceptor is the Asp-81.

This sequence belongs to the Maf family. YhdE subfamily. A divalent metal cation serves as cofactor.

It is found in the cytoplasm. The enzyme catalyses dTTP + H2O = dTMP + diphosphate + H(+). The catalysed reaction is UTP + H2O = UMP + diphosphate + H(+). In terms of biological role, nucleoside triphosphate pyrophosphatase that hydrolyzes dTTP and UTP. May have a dual role in cell division arrest and in preventing the incorporation of modified nucleotides into cellular nucleic acids. This chain is dTTP/UTP pyrophosphatase, found in Albidiferax ferrireducens (strain ATCC BAA-621 / DSM 15236 / T118) (Rhodoferax ferrireducens).